The following is a 358-amino-acid chain: Molybdenum import ATP-binding protein ModC 2 (358 aa).

Positions 1–234 constitute an ABC transporter domain; that stretch reads MPEQGIEAQL…PRLPLNHPDE (234 aa). Residue 35 to 42 participates in ATP binding; it reads GRSGSGKT. Residues 293-358 enclose the Mop domain; the sequence is NSSILNILRV…AQIKSVALME (66 aa).

This sequence belongs to the ABC transporter superfamily. Molybdate importer (TC 3.A.1.8) family. The complex is composed of two ATP-binding proteins (ModC), two transmembrane proteins (ModB) and a solute-binding protein (ModA).

It is found in the cell inner membrane. It carries out the reaction molybdate(out) + ATP + H2O = molybdate(in) + ADP + phosphate + H(+). Functionally, part of the ABC transporter complex ModABC involved in molybdenum import. Responsible for energy coupling to the transport system. In Azotobacter vinelandii, this protein is Molybdenum import ATP-binding protein ModC 2.